The primary structure comprises 276 residues: Formamidopyrimidine-DNA glycosylase (276 aa).

The active-site Schiff-base intermediate with DNA is the Pro-2. Glu-3 functions as the Proton donor in the catalytic mechanism. Catalysis depends on Lys-58, which acts as the Proton donor; for beta-elimination activity. DNA contacts are provided by His-94, Arg-112, and Arg-157. An FPG-type zinc finger spans residues 242 to 276 (FVYDRAGEPCRVCGAPIRQIVQGQRSTYFCPNCQR). Arg-266 functions as the Proton donor; for delta-elimination activity in the catalytic mechanism.

The protein belongs to the FPG family. As to quaternary structure, monomer. It depends on Zn(2+) as a cofactor.

The catalysed reaction is Hydrolysis of DNA containing ring-opened 7-methylguanine residues, releasing 2,6-diamino-4-hydroxy-5-(N-methyl)formamidopyrimidine.. The enzyme catalyses 2'-deoxyribonucleotide-(2'-deoxyribose 5'-phosphate)-2'-deoxyribonucleotide-DNA = a 3'-end 2'-deoxyribonucleotide-(2,3-dehydro-2,3-deoxyribose 5'-phosphate)-DNA + a 5'-end 5'-phospho-2'-deoxyribonucleoside-DNA + H(+). Functionally, involved in base excision repair of DNA damaged by oxidation or by mutagenic agents. Acts as a DNA glycosylase that recognizes and removes damaged bases. Has a preference for oxidized purines, such as 7,8-dihydro-8-oxoguanine (8-oxoG). Has AP (apurinic/apyrimidinic) lyase activity and introduces nicks in the DNA strand. Cleaves the DNA backbone by beta-delta elimination to generate a single-strand break at the site of the removed base with both 3'- and 5'-phosphates. The chain is Formamidopyrimidine-DNA glycosylase from Burkholderia pseudomallei (strain 1710b).